The primary structure comprises 364 residues: 3-dehydroquinate synthase (364 aa).

Residues 75–80, 109–113, 133–134, lysine 146, lysine 155, and 173–176 each bind NAD(+); these read DGEQYK, GVIGD, TT, and TLDT. Residues glutamate 188, histidine 251, and histidine 268 each coordinate Zn(2+).

Belongs to the sugar phosphate cyclases superfamily. Dehydroquinate synthase family. Co(2+) is required as a cofactor. Requires Zn(2+) as cofactor. NAD(+) serves as cofactor.

It is found in the cytoplasm. It carries out the reaction 7-phospho-2-dehydro-3-deoxy-D-arabino-heptonate = 3-dehydroquinate + phosphate. It participates in metabolic intermediate biosynthesis; chorismate biosynthesis; chorismate from D-erythrose 4-phosphate and phosphoenolpyruvate: step 2/7. In terms of biological role, catalyzes the conversion of 3-deoxy-D-arabino-heptulosonate 7-phosphate (DAHP) to dehydroquinate (DHQ). The chain is 3-dehydroquinate synthase from Dechloromonas aromatica (strain RCB).